A 123-amino-acid polypeptide reads, in one-letter code: Small ribosomal subunit protein uS12c (123 aa).

The segment covering 1 to 16 has biased composition (polar residues); sequence MPTIQQLIRNSRQPAE. The interval 1 to 23 is disordered; the sequence is MPTIQQLIRNSRQPAENRTKSPA.

Belongs to the universal ribosomal protein uS12 family. Part of the 30S ribosomal subunit.

It localises to the plastid. Its subcellular location is the chloroplast. With S4 and S5 plays an important role in translational accuracy. Located at the interface of the 30S and 50S subunits. The sequence is that of Small ribosomal subunit protein uS12c (rps12) from Staurastrum punctulatum (Green alga).